A 291-amino-acid chain; its full sequence is Early E4 34 kDa protein (291 aa).

It belongs to the adenoviridae E4 30 to 34 kDa protein family. In terms of assembly, interacts with E1B-55k.

The protein localises to the host nucleus. It localises to the host cytoplasm. Plays a major role to prevent cellular inhibition of viral genome replication by nuclear bodies. Assembles an SCF-like E3 ubiquitin ligase complex based on the cellular proteins ELOB, ELOC, CUL5 and RBX1, in cooperation with viral E1B-55K. This viral RING-type ligase ubiquitinates cellular substrates prior to proteasomal degradation: p53/TP53, LIG4, MRE11-RAD50-NBS1 (MRN) complex, ITGA3, DAXX and BLM. The sequence is that of Early E4 34 kDa protein from Homo sapiens (Human).